A 362-amino-acid chain; its full sequence is Peptide chain release factor 1 (362 aa).

Q237 carries the post-translational modification N5-methylglutamine.

This sequence belongs to the prokaryotic/mitochondrial release factor family. Post-translationally, methylated by PrmC. Methylation increases the termination efficiency of RF1.

The protein localises to the cytoplasm. In terms of biological role, peptide chain release factor 1 directs the termination of translation in response to the peptide chain termination codons UAG and UAA. The sequence is that of Peptide chain release factor 1 from Aliivibrio fischeri (strain ATCC 700601 / ES114) (Vibrio fischeri).